The following is a 364-amino-acid chain: tRNA/tmRNA (uracil-C(5))-methyltransferase (364 aa).

Positions 188, 216, 221, 237, and 297 each coordinate S-adenosyl-L-methionine. The Nucleophile role is filled by Cys-322. Glu-356 functions as the Proton acceptor in the catalytic mechanism.

The protein belongs to the class I-like SAM-binding methyltransferase superfamily. RNA M5U methyltransferase family. TrmA subfamily.

It carries out the reaction uridine(54) in tRNA + S-adenosyl-L-methionine = 5-methyluridine(54) in tRNA + S-adenosyl-L-homocysteine + H(+). The catalysed reaction is uridine(341) in tmRNA + S-adenosyl-L-methionine = 5-methyluridine(341) in tmRNA + S-adenosyl-L-homocysteine + H(+). In terms of biological role, dual-specificity methyltransferase that catalyzes the formation of 5-methyluridine at position 54 (m5U54) in all tRNAs, and that of position 341 (m5U341) in tmRNA (transfer-mRNA). In Mannheimia succiniciproducens (strain KCTC 0769BP / MBEL55E), this protein is tRNA/tmRNA (uracil-C(5))-methyltransferase.